We begin with the raw amino-acid sequence, 253 residues long: Ribosomal RNA small subunit methyltransferase A (253 aa).

Positions 12, 14, 39, 60, 81, and 104 each coordinate S-adenosyl-L-methionine.

The protein belongs to the class I-like SAM-binding methyltransferase superfamily. rRNA adenine N(6)-methyltransferase family. RsmA subfamily.

It is found in the cytoplasm. It catalyses the reaction adenosine(1518)/adenosine(1519) in 16S rRNA + 4 S-adenosyl-L-methionine = N(6)-dimethyladenosine(1518)/N(6)-dimethyladenosine(1519) in 16S rRNA + 4 S-adenosyl-L-homocysteine + 4 H(+). Its function is as follows. Specifically dimethylates two adjacent adenosines (A1518 and A1519) in the loop of a conserved hairpin near the 3'-end of 16S rRNA in the 30S particle. May play a critical role in biogenesis of 30S subunits. This Acidovorax ebreus (strain TPSY) (Diaphorobacter sp. (strain TPSY)) protein is Ribosomal RNA small subunit methyltransferase A.